Consider the following 190-residue polypeptide: Threonylcarbamoyl-AMP synthase (190 aa).

The region spanning 7–190 (LGSIAQAVDV…ALTGERFRQG (184 aa)) is the YrdC-like domain.

The protein belongs to the SUA5 family. TsaC subfamily.

It localises to the cytoplasm. The enzyme catalyses L-threonine + hydrogencarbonate + ATP = L-threonylcarbamoyladenylate + diphosphate + H2O. Functionally, required for the formation of a threonylcarbamoyl group on adenosine at position 37 (t(6)A37) in tRNAs that read codons beginning with adenine. Catalyzes the conversion of L-threonine, HCO(3)(-)/CO(2) and ATP to give threonylcarbamoyl-AMP (TC-AMP) as the acyladenylate intermediate, with the release of diphosphate. The polypeptide is Threonylcarbamoyl-AMP synthase (Enterobacter sp. (strain 638)).